The primary structure comprises 314 residues: Hydroxyethylthiazole kinase (314 aa).

Residue M70 participates in substrate binding. The ATP site is built by R145 and S217. G244 is a binding site for substrate.

This sequence belongs to the Thz kinase family. Requires Mg(2+) as cofactor.

It carries out the reaction 5-(2-hydroxyethyl)-4-methylthiazole + ATP = 4-methyl-5-(2-phosphooxyethyl)-thiazole + ADP + H(+). The protein operates within cofactor biosynthesis; thiamine diphosphate biosynthesis; 4-methyl-5-(2-phosphoethyl)-thiazole from 5-(2-hydroxyethyl)-4-methylthiazole: step 1/1. In terms of biological role, catalyzes the phosphorylation of the hydroxyl group of 4-methyl-5-beta-hydroxyethylthiazole (THZ). In Bifidobacterium longum (strain NCC 2705), this protein is Hydroxyethylthiazole kinase.